Reading from the N-terminus, the 243-residue chain is Pyridoxine 5'-phosphate synthase (243 aa).

Residue N9 coordinates 3-amino-2-oxopropyl phosphate. 11 to 12 contacts 1-deoxy-D-xylulose 5-phosphate; the sequence is DH. R20 contacts 3-amino-2-oxopropyl phosphate. Residue H45 is the Proton acceptor of the active site. 2 residues coordinate 1-deoxy-D-xylulose 5-phosphate: R47 and H52. The Proton acceptor role is filled by E72. Residue T102 coordinates 1-deoxy-D-xylulose 5-phosphate. The active-site Proton donor is the H193. Residues G194 and 215–216 each bind 3-amino-2-oxopropyl phosphate; that span reads GH.

This sequence belongs to the PNP synthase family. Homooctamer; tetramer of dimers.

The protein resides in the cytoplasm. The enzyme catalyses 3-amino-2-oxopropyl phosphate + 1-deoxy-D-xylulose 5-phosphate = pyridoxine 5'-phosphate + phosphate + 2 H2O + H(+). It participates in cofactor biosynthesis; pyridoxine 5'-phosphate biosynthesis; pyridoxine 5'-phosphate from D-erythrose 4-phosphate: step 5/5. Catalyzes the complicated ring closure reaction between the two acyclic compounds 1-deoxy-D-xylulose-5-phosphate (DXP) and 3-amino-2-oxopropyl phosphate (1-amino-acetone-3-phosphate or AAP) to form pyridoxine 5'-phosphate (PNP) and inorganic phosphate. The chain is Pyridoxine 5'-phosphate synthase from Vibrio parahaemolyticus serotype O3:K6 (strain RIMD 2210633).